The following is a 346-amino-acid chain: Methylthioribose-1-phosphate isomerase (346 aa).

Substrate contacts are provided by residues 54 to 56 (RGA), Arg-91, and Gln-192. The active-site Proton donor is Asp-233. A substrate-binding site is contributed by 243–244 (NK).

Belongs to the eIF-2B alpha/beta/delta subunits family. MtnA subfamily.

The enzyme catalyses 5-(methylsulfanyl)-alpha-D-ribose 1-phosphate = 5-(methylsulfanyl)-D-ribulose 1-phosphate. It participates in amino-acid biosynthesis; L-methionine biosynthesis via salvage pathway; L-methionine from S-methyl-5-thio-alpha-D-ribose 1-phosphate: step 1/6. In terms of biological role, catalyzes the interconversion of methylthioribose-1-phosphate (MTR-1-P) into methylthioribulose-1-phosphate (MTRu-1-P). The chain is Methylthioribose-1-phosphate isomerase from Yersinia pseudotuberculosis serotype IB (strain PB1/+).